The primary structure comprises 223 residues: RNA polymerase sigma-H factor (223 aa).

The Polymerase core binding motif lies at 67–80 (DIVQEGMIGLYKSI). The segment at residues 187 to 206 (YQEISEELNRHVKSIDNALQ) is a DNA-binding region (H-T-H motif).

The protein belongs to the sigma-70 factor family.

In terms of biological role, sigma factors are initiation factors that promote the attachment of RNA polymerase to specific initiation sites and are then released. This sigma factor is involved in the transition to post-exponential phase in the beginning of sporulation. The chain is RNA polymerase sigma-H factor (sigH) from Bacillus licheniformis.